A 290-amino-acid chain; its full sequence is Glycine--tRNA ligase alpha subunit (290 aa).

The protein belongs to the class-II aminoacyl-tRNA synthetase family. Tetramer of two alpha and two beta subunits.

The protein resides in the cytoplasm. It carries out the reaction tRNA(Gly) + glycine + ATP = glycyl-tRNA(Gly) + AMP + diphosphate. This is Glycine--tRNA ligase alpha subunit from Syntrophotalea carbinolica (strain DSM 2380 / NBRC 103641 / GraBd1) (Pelobacter carbinolicus).